The sequence spans 174 residues: ATP synthase subunit delta (174 aa).

It belongs to the ATPase delta chain family. In terms of assembly, F-type ATPases have 2 components, F(1) - the catalytic core - and F(0) - the membrane proton channel. F(1) has five subunits: alpha(3), beta(3), gamma(1), delta(1), epsilon(1). F(0) has three main subunits: a(1), b(2) and c(10-14). The alpha and beta chains form an alternating ring which encloses part of the gamma chain. F(1) is attached to F(0) by a central stalk formed by the gamma and epsilon chains, while a peripheral stalk is formed by the delta and b chains.

The protein localises to the cell inner membrane. In terms of biological role, f(1)F(0) ATP synthase produces ATP from ADP in the presence of a proton or sodium gradient. F-type ATPases consist of two structural domains, F(1) containing the extramembraneous catalytic core and F(0) containing the membrane proton channel, linked together by a central stalk and a peripheral stalk. During catalysis, ATP synthesis in the catalytic domain of F(1) is coupled via a rotary mechanism of the central stalk subunits to proton translocation. Functionally, this protein is part of the stalk that links CF(0) to CF(1). It either transmits conformational changes from CF(0) to CF(1) or is implicated in proton conduction. The sequence is that of ATP synthase subunit delta from Francisella tularensis subsp. mediasiatica (strain FSC147).